The primary structure comprises 1372 residues: Disease resistance protein RRS1B (1372 aa).

In terms of domain architecture, TIR spans 2–137 (TESEQIVYIS…ETVRDVYEKL (136 aa)). The NB-ARC domain occupies 166-417 (VGIWGMPGIG…GCGFFPHVGI (252 aa)). Position 170–177 (170–177 (GMPGIGKT)) interacts with ATP. An LRR 1 repeat occupies 491 to 515 (PEEIEGMFLDTSNLSFDIKHVAFDN). The stretch at 528 to 544 (NPEVHHVNNFLKGSLSS) is one LRR 2; degenerate repeat. 10 LRR repeats span residues 545-568 (LPNV…NFDP), 570-591 (HLVE…TKDL), 614-637 (AQNL…TGQL), 638-658 (LHLR…PEIP), 659-681 (PNIE…IVKP), 693-718 (IPGL…KIST), 723-747 (PGKL…VNLE), 749-767 (LKAL…QGFP), 768-792 (RNLK…SLEF), and 798-823 (CVSL…CFDL). A Nuclear localization signal motif is present at residues 950 to 964 (INLHCWALGKAVERD). The segment at residues 1174 to 1240 (DRGSRSSDLW…YISEHNHPFP (67 aa)) is a DNA-binding region (WRKY). Disordered regions lie at residues 1246–1288 (LAGS…ASPP) and 1337–1372 (QTMF…ILNR). A compositionally biased stretch (low complexity) spans 1249-1269 (STRSSSSKCSDVTTSASSTVS). Basic and acidic residues predominate over residues 1270-1279 (QDKEGPDKSH). Positions 1337-1348 (QTMFLSRRSSGG) are enriched in polar residues.

The protein belongs to the disease resistance TIR-NB-LRR family. In terms of assembly, interacts with RPS4B. RPS4B-RRS1B heterodimer interacts with the bacterial effectors AvrRps4 and PopP2.

Its subcellular location is the nucleus. In terms of biological role, transcription factor. Interacts specifically with the W box (5'-(T)TGAC[CT]-3'), a frequently occurring elicitor-responsive cis-acting element. Also acts as a disease resistance protein that specifically recognizes the AvrRps4 type III effector avirulence protein from P.syringae. Heterodimerization with RPS4B is required to form a functional complex to recognize AvrRps4 and to mediate the hypersensitive response. The chain is Disease resistance protein RRS1B from Arabidopsis thaliana (Mouse-ear cress).